The following is a 367-amino-acid chain: Flagellar P-ring protein (367 aa).

The first 18 residues, 1 to 18 (MFRALITALFCFSGLALA), serve as a signal peptide directing secretion.

It belongs to the FlgI family. The basal body constitutes a major portion of the flagellar organelle and consists of four rings (L,P,S, and M) mounted on a central rod.

It is found in the periplasm. The protein resides in the bacterial flagellum basal body. Its function is as follows. Assembles around the rod to form the L-ring and probably protects the motor/basal body from shearing forces during rotation. This chain is Flagellar P-ring protein, found in Rhizorhabdus wittichii (strain DSM 6014 / CCUG 31198 / JCM 15750 / NBRC 105917 / EY 4224 / RW1) (Sphingomonas wittichii).